The chain runs to 300 residues: GTPase Era (300 aa).

Residues Tyr-7–Glu-175 form the Era-type G domain. The tract at residues Gly-15–Ser-22 is G1. Gly-15–Ser-22 serves as a coordination point for GTP. A G2 region spans residues Gln-41–His-45. Positions Asp-62–Gly-65 are G3. GTP-binding positions include Asp-62–Leu-66 and Asn-124–Asp-127. Positions Asn-124–Asp-127 are G4. Residues Ile-154 to Ala-156 are G5. Positions Met-206–Ala-283 constitute a KH type-2 domain.

The protein belongs to the TRAFAC class TrmE-Era-EngA-EngB-Septin-like GTPase superfamily. Era GTPase family. Monomer.

Its subcellular location is the cytoplasm. The protein resides in the cell inner membrane. Its function is as follows. An essential GTPase that binds both GDP and GTP, with rapid nucleotide exchange. Plays a role in 16S rRNA processing and 30S ribosomal subunit biogenesis and possibly also in cell cycle regulation and energy metabolism. In Glaesserella parasuis serovar 5 (strain SH0165) (Haemophilus parasuis), this protein is GTPase Era.